The following is a 198-amino-acid chain: Chromophore lyase CpcS/CpeS 2 (198 aa).

This sequence belongs to the CpcS/CpeS biliprotein lyase family.

It localises to the plastid. The protein localises to the organellar chromatophore. Functionally, covalently attaches a chromophore to Cys residue(s) of phycobiliproteins. This Paulinella chromatophora protein is Chromophore lyase CpcS/CpeS 2.